The sequence spans 245 residues: DNA polymerase sliding clamp 2 (245 aa).

This sequence belongs to the PCNA family. As to quaternary structure, homotrimer. The subunits circularize to form a toroid; DNA passes through its center. Replication factor C (RFC) is required to load the toroid on the DNA.

Functionally, sliding clamp subunit that acts as a moving platform for DNA processing. Responsible for tethering the catalytic subunit of DNA polymerase and other proteins to DNA during high-speed replication. The sequence is that of DNA polymerase sliding clamp 2 from Sulfolobus acidocaldarius (strain ATCC 33909 / DSM 639 / JCM 8929 / NBRC 15157 / NCIMB 11770).